A 353-amino-acid chain; its full sequence is A-kinase anchor protein 7 isoforms delta and gamma (353 aa).

Composition is skewed to basic and acidic residues over residues 1–22 (MERP…RGEE) and 66–76 (RSKENRGDRND). Disordered regions lie at residues 1–33 (MERP…SPVG) and 47–85 (DDCG…KKAK). AMP-binding positions include T134 and 224–226 (HLT). CMP-binding positions include T134 and 224 to 226 (HLT). Residues 299 to 353 (AELVRLSKRLVENAVLKAVQQYLEETQNKKQPGEGNSVKAEEGDRNGDGSDNNRK) are PKA-RII-alpha subunit binding domain. Residues 300–324 (ELVRLSKRLVENAVLKAVQQYLEET) are RI-alpha-binding. The segment at 301–314 (LVRLSKRLVENAVL) is RII-binding. Residues 321-353 (LEETQNKKQPGEGNSVKAEEGDRNGDGSDNNRK) are disordered. The span at 337–353 (KAEEGDRNGDGSDNNRK) shows a compositional bias: basic and acidic residues.

Binds cAMP-dependent protein kinase (PKA). Interacts with PRKCA; only the cytoplasmic form is capable of interacting with PRKCA. In terms of tissue distribution, expressed highly in the heart, and moderately in brain, lung, liver, kidney and testis. Hardly detectable in spleen and skeletal muscle. In kidney, isoform Delta is expressed in the principal cells of the IMCD.

Its subcellular location is the nucleus. It localises to the cytoplasm. It is found in the cell membrane. In terms of biological role, probably targets cAMP-dependent protein kinase (PKA) to the cellular membrane or cytoskeletal structures. The membrane-associated form reduces epithelial sodium channel (ENaC) activity, whereas the free cytoplasmic form may negatively regulate ENaC channel feedback inhibition by intracellular sodium. Isoform Delta may be involved in shuttling aquaporin-2 (AQP2) to the plasma membrane. This Rattus norvegicus (Rat) protein is A-kinase anchor protein 7 isoforms delta and gamma.